The sequence spans 330 residues: GTPase Obg (330 aa).

An Obg domain is found at 1-159 (MHFIDEVKIY…MWIHLSLKLL (159 aa)). One can recognise an OBG-type G domain in the interval 160–327 (SDVGLVGLPN…IVKLALETIK (168 aa)). GTP contacts are provided by residues 166-173 (GLPNAGKS), 191-195 (FTTLV), 212-215 (DIPG), 279-282 (NKCD), and 308-310 (STC). 2 residues coordinate Mg(2+): serine 173 and threonine 193.

This sequence belongs to the TRAFAC class OBG-HflX-like GTPase superfamily. OBG GTPase family. Monomer. Mg(2+) is required as a cofactor.

It localises to the cytoplasm. An essential GTPase which binds GTP, GDP and possibly (p)ppGpp with moderate affinity, with high nucleotide exchange rates and a fairly low GTP hydrolysis rate. Plays a role in control of the cell cycle, stress response, ribosome biogenesis and in those bacteria that undergo differentiation, in morphogenesis control. The chain is GTPase Obg from Rickettsia conorii (strain ATCC VR-613 / Malish 7).